Reading from the N-terminus, the 95-residue chain is Large ribosomal subunit protein bL25 (95 aa).

It belongs to the bacterial ribosomal protein bL25 family. As to quaternary structure, part of the 50S ribosomal subunit; part of the 5S rRNA/L5/L18/L25 subcomplex. Contacts the 5S rRNA. Binds to the 5S rRNA independently of L5 and L18.

Its function is as follows. This is one of the proteins that binds to the 5S RNA in the ribosome where it forms part of the central protuberance. In Shewanella loihica (strain ATCC BAA-1088 / PV-4), this protein is Large ribosomal subunit protein bL25.